Here is a 949-residue protein sequence, read N- to C-terminus: AP-1 complex subunit beta-1 (949 aa).

Lysine 318 is modified (N6-acetyllysine). Tyrosine 574 is subject to 3'-nitrotyrosine. A disordered region spans residues 584–625; the sequence is GGRGVVHKSLPPRTASSESAESPETAPTGAPPGEQPDVIPAQ. The span at 594–611 shows a compositional bias: low complexity; it reads PPRTASSESAESPETAPT.

Belongs to the adaptor complexes large subunit family. Adaptor protein complex 1 (AP-1) is a heterotetramer composed of two large adaptins (gamma-type subunit AP1G1 and beta-type subunit AP1B1), a medium adaptin (mu-type subunit AP1M1 or AP1M2) and a small adaptin (sigma-type subunit AP1S1 or AP1S2 or AP1S3). Widely expressed.

It localises to the golgi apparatus. The protein localises to the cytoplasmic vesicle. It is found in the clathrin-coated vesicle membrane. Subunit of clathrin-associated adaptor protein complex 1 that plays a role in protein sorting in the late-Golgi/trans-Golgi network (TGN) and/or endosomes. The AP complexes mediate both the recruitment of clathrin to membranes and the recognition of sorting signals within the cytosolic tails of transmembrane cargo molecules. The protein is AP-1 complex subunit beta-1 (AP1B1) of Homo sapiens (Human).